Consider the following 84-residue polypeptide: Limulin (84 aa).

Positions 6–84 constitute a Pentraxin (PTX) domain; sequence ITSKVKFPPS…DEQGDFLFNV (79 aa). Ca(2+) is bound by residues Asp67 and Asn68.

It belongs to the pentraxin family. In terms of assembly, homopentamer. Pentraxin (or pentaxin) have a discoid arrangement of 5 non-covalently bound subunits. It depends on Ca(2+) as a cofactor. A disulfide bond links Cys-38 to a Cys in the C-terminal half of the chain of 163 residues.

In terms of biological role, lectin that binds sialic acid. Displays antiviral activity and therefore may contribute to defense against infections. The protein is Limulin of Limulus polyphemus (Atlantic horseshoe crab).